The primary structure comprises 142 residues: COA8 family protein CBG23705, mitochondrial (142 aa).

Belongs to the COA8 family.

It localises to the mitochondrion inner membrane. Functionally, may be required for cytochrome c complex (COX) assembly and function, COX being the terminal component of the mitochondrial respiratory chain. The sequence is that of COA8 family protein CBG23705, mitochondrial from Caenorhabditis briggsae.